Consider the following 170-residue polypeptide: Small ribosomal subunit protein uS9 (170 aa).

Residues 1-47 are disordered; that stretch reads MAETTPEQPLEEIDIDSYTTESEVPVEGEYTSESMASAFGEPQPAAG.

This sequence belongs to the universal ribosomal protein uS9 family.

This is Small ribosomal subunit protein uS9 (rpsI) from Streptomyces coelicolor (strain ATCC BAA-471 / A3(2) / M145).